Reading from the N-terminus, the 272-residue chain is Glutamate racemase (272 aa).

Substrate-binding positions include 13–14 (DS) and 45–46 (YG). Residue C76 is the Proton donor/acceptor of the active site. 77–78 (NT) lines the substrate pocket. The active-site Proton donor/acceptor is the C186. 187–188 (TH) is a binding site for substrate.

This sequence belongs to the aspartate/glutamate racemases family.

The enzyme catalyses L-glutamate = D-glutamate. It functions in the pathway cell wall biogenesis; peptidoglycan biosynthesis. Its function is as follows. Provides the (R)-glutamate required for cell wall biosynthesis. The polypeptide is Glutamate racemase (Cupriavidus pinatubonensis (strain JMP 134 / LMG 1197) (Cupriavidus necator (strain JMP 134))).